Here is a 335-residue protein sequence, read N- to C-terminus: tRNA N6-adenosine threonylcarbamoyltransferase (335 aa).

Fe cation is bound by residues histidine 111 and histidine 115. Substrate contacts are provided by residues 134–138, aspartate 167, glycine 180, and asparagine 270; that span reads LISGG. Position 298 (aspartate 298) interacts with Fe cation.

Belongs to the KAE1 / TsaD family. Fe(2+) is required as a cofactor.

The protein localises to the cytoplasm. It carries out the reaction L-threonylcarbamoyladenylate + adenosine(37) in tRNA = N(6)-L-threonylcarbamoyladenosine(37) in tRNA + AMP + H(+). Its function is as follows. Required for the formation of a threonylcarbamoyl group on adenosine at position 37 (t(6)A37) in tRNAs that read codons beginning with adenine. Is involved in the transfer of the threonylcarbamoyl moiety of threonylcarbamoyl-AMP (TC-AMP) to the N6 group of A37, together with TsaE and TsaB. TsaD likely plays a direct catalytic role in this reaction. The protein is tRNA N6-adenosine threonylcarbamoyltransferase of Nitrosococcus oceani (strain ATCC 19707 / BCRC 17464 / JCM 30415 / NCIMB 11848 / C-107).